A 382-amino-acid polypeptide reads, in one-letter code: 1-deoxy-D-xylulose 5-phosphate reductoisomerase (382 aa).

Positions 10, 11, 12, 13, 36, and 122 each coordinate NADPH. K123 serves as a coordination point for 1-deoxy-D-xylulose 5-phosphate. E124 is an NADPH binding site. D148 contacts Mn(2+). 4 residues coordinate 1-deoxy-D-xylulose 5-phosphate: S149, E150, S174, and H197. E150 is a binding site for Mn(2+). G203 is a binding site for NADPH. S210, N215, K216, and E219 together coordinate 1-deoxy-D-xylulose 5-phosphate. Position 219 (E219) interacts with Mn(2+).

Belongs to the DXR family. Mg(2+) serves as cofactor. The cofactor is Mn(2+).

It carries out the reaction 2-C-methyl-D-erythritol 4-phosphate + NADP(+) = 1-deoxy-D-xylulose 5-phosphate + NADPH + H(+). It functions in the pathway isoprenoid biosynthesis; isopentenyl diphosphate biosynthesis via DXP pathway; isopentenyl diphosphate from 1-deoxy-D-xylulose 5-phosphate: step 1/6. In terms of biological role, catalyzes the NADPH-dependent rearrangement and reduction of 1-deoxy-D-xylulose-5-phosphate (DXP) to 2-C-methyl-D-erythritol 4-phosphate (MEP). This is 1-deoxy-D-xylulose 5-phosphate reductoisomerase from Prosthecochloris aestuarii (strain DSM 271 / SK 413).